We begin with the raw amino-acid sequence, 325 residues long: Phospho-N-acetylmuramoyl-pentapeptide-transferase (325 aa).

9 helical membrane passes run 7-27 (LFVL…FIPF), 57-77 (IVIV…ITGF), 81-101 (LLLL…DDYL), 122-142 (VIAA…FIAI), 146-166 (TFGF…LLGA), 186-206 (IAFG…TALF), 227-247 (VFMG…IAIL), 252-272 (LMLI…IIQV), and 302-322 (VVVT…YIGV).

It belongs to the glycosyltransferase 4 family. MraY subfamily. Requires Mg(2+) as cofactor.

Its subcellular location is the cell membrane. It catalyses the reaction UDP-N-acetyl-alpha-D-muramoyl-L-alanyl-gamma-D-glutamyl-meso-2,6-diaminopimeloyl-D-alanyl-D-alanine + di-trans,octa-cis-undecaprenyl phosphate = di-trans,octa-cis-undecaprenyl diphospho-N-acetyl-alpha-D-muramoyl-L-alanyl-D-glutamyl-meso-2,6-diaminopimeloyl-D-alanyl-D-alanine + UMP. Its pathway is cell wall biogenesis; peptidoglycan biosynthesis. Its function is as follows. Catalyzes the initial step of the lipid cycle reactions in the biosynthesis of the cell wall peptidoglycan: transfers peptidoglycan precursor phospho-MurNAc-pentapeptide from UDP-MurNAc-pentapeptide onto the lipid carrier undecaprenyl phosphate, yielding undecaprenyl-pyrophosphoryl-MurNAc-pentapeptide, known as lipid I. This chain is Phospho-N-acetylmuramoyl-pentapeptide-transferase, found in Shouchella clausii (strain KSM-K16) (Alkalihalobacillus clausii).